A 1132-amino-acid chain; its full sequence is Tyrosine-protein kinase JAK2 (1132 aa).

The interval 1 to 239 (MGMACLTMTE…RYRFRRFIQQ (239 aa)) is interaction with cytokine/interferon/growth hormone receptors. Residues 37–380 (PVLLVYLYHS…GYYRLTADAH (344 aa)) enclose the FERM domain. Tyr-119 carries the phosphotyrosine; by autocatalysis modification. Residues Tyr-372 and Tyr-373 each carry the phosphotyrosine modification. Residues 401–482 (HGPISMDFAI…SLKDLLNCYQ (82 aa)) enclose the SH2; atypical domain. Ser-523 carries the phosphoserine modification. Residues 545–809 (LIFNESLGQG…AIIRDLNSLF (265 aa)) enclose the Protein kinase 1 domain. 2 positions are modified to phosphotyrosine: Tyr-570 and Tyr-813. A Protein kinase 2 domain is found at 849–1126 (LKFLQQLGKG…RDLALRVDQI (278 aa)). 855 to 863 (LGKGNFGSV) is a binding site for ATP. Tyr-868 is modified (phosphotyrosine; by autocatalysis). ATP is bound at residue Lys-882. Tyr-966 and Tyr-972 each carry phosphotyrosine; by autocatalysis. Asp-976 functions as the Proton acceptor in the catalytic mechanism. Phosphotyrosine; by autocatalysis is present on residues Tyr-1007 and Tyr-1008.

The protein belongs to the protein kinase superfamily. Tyr protein kinase family. JAK subfamily. As to quaternary structure, interacts with IL23R, SKB1 and STAM2. Interacts with EPOR. Interacts with LYN. Interacts with SIRPA. Interacts with SH2B1. Interacts with TEC. Interacts with IFNGR2 (via intracellular domain). Interacts with LEPR (Isoform B). Interacts with HSP90AB1; promotes functional activation in a heat shock-dependent manner. Interacts with STRA6. Interacts with RHEX; this interaction occurs in a erythropoietin (EPO)-dependent manner. Interacts with ASB2; the interaction targets JAK2 for Notch-induced proteasomal degradation. Mg(2+) serves as cofactor. Post-translationally, autophosphorylated, leading to regulate its activity. Leptin promotes phosphorylation on tyrosine residues, including phosphorylation on Tyr-813. Autophosphorylation on Tyr-119 in response to EPO down-regulates its kinase activity. Autophosphorylation on Tyr-868, Tyr-966 and Tyr-972 in response to growth hormone (GH) are required for maximal kinase activity. Also phosphorylated by TEC. Phosphorylated on tyrosine residues in response to interferon gamma signaling. Phosphorylated on tyrosine residues in response to a signaling cascade that is activated by increased cellular retinol. In terms of processing, undergoes Notch-induced ubiquitination and subsequent proteasomal degradation which is mediated by ASB1 or ASB2, the substrate-recognition components of probable ECS E3 ubiquitin-protein ligase complexes.

Its subcellular location is the endomembrane system. It localises to the cytoplasm. It is found in the nucleus. It carries out the reaction L-tyrosyl-[protein] + ATP = O-phospho-L-tyrosyl-[protein] + ADP + H(+). With respect to regulation, regulated by autophosphorylation, can both activate or decrease activity. Heme regulates its activity by enhancing the phosphorylation on Tyr-1007 and Tyr-1008. Its function is as follows. Non-receptor tyrosine kinase involved in various processes such as cell growth, development, differentiation or histone modifications. Mediates essential signaling events in both innate and adaptive immunity. In the cytoplasm, plays a pivotal role in signal transduction via its association with type I receptors such as growth hormone (GHR), prolactin (PRLR), leptin (LEPR), erythropoietin (EPOR), thrombopoietin (THPO); or type II receptors including IFN-alpha, IFN-beta, IFN-gamma and multiple interleukins. Following ligand-binding to cell surface receptors, phosphorylates specific tyrosine residues on the cytoplasmic tails of the receptor, creating docking sites for STATs proteins. Subsequently, phosphorylates the STATs proteins once they are recruited to the receptor. Phosphorylated STATs then form homodimer or heterodimers and translocate to the nucleus to activate gene transcription. For example, cell stimulation with erythropoietin (EPO) during erythropoiesis leads to JAK2 autophosphorylation, activation, and its association with erythropoietin receptor (EPOR) that becomes phosphorylated in its cytoplasmic domain. Then, STAT5 (STAT5A or STAT5B) is recruited, phosphorylated and activated by JAK2. Once activated, dimerized STAT5 translocates into the nucleus and promotes the transcription of several essential genes involved in the modulation of erythropoiesis. Part of a signaling cascade that is activated by increased cellular retinol and that leads to the activation of STAT5 (STAT5A or STAT5B). In addition, JAK2 mediates angiotensin-2-induced ARHGEF1 phosphorylation. Plays a role in cell cycle by phosphorylating CDKN1B. Cooperates with TEC through reciprocal phosphorylation to mediate cytokine-driven activation of FOS transcription. In the nucleus, plays a key role in chromatin by specifically mediating phosphorylation of 'Tyr-41' of histone H3 (H3Y41ph), a specific tag that promotes exclusion of CBX5 (HP1 alpha) from chromatin. Up-regulates the potassium voltage-gated channel activity of KCNA3. The sequence is that of Tyrosine-protein kinase JAK2 from Pongo abelii (Sumatran orangutan).